The chain runs to 176 residues: MIRTKNIFLIGPVGAGKSTIGKQLAKQLKLEFIDSDDVIEKKCGVDINWIFDLEGEEGFRKREREVISEILAEKQNIVLATGGGAILDPETRSLLSSRGKVVYLEATIEQQLERTSKDTKRPLLRVDDKRPVLEQLMAEREPLYRSIADVVVETNGATVKNIVNKISTFLVEETIL.

14–19 (GAGKST) serves as a coordination point for ATP. Ser-18 serves as a coordination point for Mg(2+). Positions 36, 60, and 83 each coordinate substrate. Arg-121 contacts ATP. Arg-140 lines the substrate pocket.

The protein belongs to the shikimate kinase family. As to quaternary structure, monomer. Mg(2+) serves as cofactor.

Its subcellular location is the cytoplasm. The enzyme catalyses shikimate + ATP = 3-phosphoshikimate + ADP + H(+). Its pathway is metabolic intermediate biosynthesis; chorismate biosynthesis; chorismate from D-erythrose 4-phosphate and phosphoenolpyruvate: step 5/7. Functionally, catalyzes the specific phosphorylation of the 3-hydroxyl group of shikimic acid using ATP as a cosubstrate. This Francisella tularensis subsp. holarctica (strain FTNF002-00 / FTA) protein is Shikimate kinase.